The sequence spans 344 residues: MELEVRHLRALCAIADAGSLHRAARRLGVAQPTLSTQLTRIEQALGGPLFTRERTGCRPTPLGRTVLGRARPLLTDMNTLVREARAAAAGGDSRLRVGSTASRALAGWLRRLRRPGLEPTLQMDVSANALLRRVTDGQLDVAFVHEVEGCALHIPEDLRLRVLVEREPQFVMLPADHPAAARPVVRLADLADDRWMVDPTVDGEWDGVHRMLRAVGLNPRVLHGDYHTAASLVATGEVVTVCQPSSQSRPDTAVRRLYGDPLGVRLLLAGTRAELDAVFPALEDAYWEAARQSTAYREWLEGGGIRTLPRCPVAATGGGRVSCGRAEGSRSRRPRDVAPPRPIG.

An HTH lysR-type domain is found at methionine 1–threonine 60. The H-T-H motif DNA-binding region spans leucine 20–threonine 39. The disordered stretch occupies residues serine 322–glycine 344. A compositionally biased stretch (basic and acidic residues) spans glutamate 327–alanine 338.

This sequence belongs to the LysR transcriptional regulatory family.

In terms of biological role, transcriptional activator of the gene (snpA) for the small neutral protease. The protein is Small neutral protease regulatory protein (mprR) of Streptomyces lividans.